A 131-amino-acid polypeptide reads, in one-letter code: Hypocretin neuropeptide precursor (131 aa).

Residues 1 to 33 form the signal peptide; sequence MNLPSTKVSWAAVTLLLLLLLLPPALLSSGAAA. Q34 carries the pyrrolidone carboxylic acid modification. Intrachain disulfides connect C39–C45 and C40–C47. The residue at position 66 (L66) is a Leucine amide. Methionine amide is present on M97. Residues 98–131 constitute a propeptide, removed in mature form; it reads GRRAGAEPAPRPCLGRRCSAPAAASVAPGGQSGI.

This sequence belongs to the orexin family. Specific enzymatic cleavages at paired basic residues yield the different active peptides. As to expression, abundantly expressed in subthalamic nucleus but undetectable in other brain regions tested (hypothalamus was not tested) and in heart, placenta, lung, liver, skeletal muscle, kidney and pancreas.

Its subcellular location is the rough endoplasmic reticulum. The protein resides in the cytoplasmic vesicle. It localises to the synapse. Functionally, neuropeptides that play a significant role in the regulation of food intake and sleep-wakefulness, possibly by coordinating the complex behavioral and physiologic responses of these complementary homeostatic functions. A broader role in the homeostatic regulation of energy metabolism, autonomic function, hormonal balance and the regulation of body fluids, is also suggested. In terms of biological role, binds to orexin receptors HCRTR1/OX1R and HCRTR2/OX2R with a high affinity. Stimulates food intake. Modulates pituitary luteinizing hormone secretion in an ovarian steroid-dependent manner. Its function is as follows. Binds to orexin receptor HCRTR2/OX2R only. Stimulates food intake. Modulates pituitary luteinizing hormone secretion in an ovarian steroid-dependent manner. This is Hypocretin neuropeptide precursor from Homo sapiens (Human).